Consider the following 224-residue polypeptide: Ribonuclease 3 (224 aa).

The RNase III domain occupies 4 to 127 (IEKLERSLTY…IIGAIHLEAG (124 aa)). Glutamate 40 lines the Mg(2+) pocket. Aspartate 44 is an active-site residue. The Mg(2+) site is built by aspartate 113 and glutamate 116. Residue glutamate 116 is part of the active site. The DRBM domain occupies 154-223 (DYKTKLQEIT…AKIALEKLGA (70 aa)).

It belongs to the ribonuclease III family. As to quaternary structure, homodimer. The cofactor is Mg(2+).

It localises to the cytoplasm. The enzyme catalyses Endonucleolytic cleavage to 5'-phosphomonoester.. In terms of biological role, digests double-stranded RNA. Involved in the processing of primary rRNA transcript to yield the immediate precursors to the large and small rRNAs (23S and 16S). Processes some mRNAs, and tRNAs when they are encoded in the rRNA operon. Processes pre-crRNA and tracrRNA of type II CRISPR loci if present in the organism. The polypeptide is Ribonuclease 3 (Campylobacter jejuni (strain RM1221)).